A 316-amino-acid polypeptide reads, in one-letter code: tRNA-cytidine(32) 2-sulfurtransferase (316 aa).

The short motif at 45 to 50 (SGGKDS) is the PP-loop motif element. 3 residues coordinate [4Fe-4S] cluster: cysteine 120, cysteine 123, and cysteine 211.

Belongs to the TtcA family. As to quaternary structure, homodimer. Requires Mg(2+) as cofactor. [4Fe-4S] cluster is required as a cofactor.

It localises to the cytoplasm. The enzyme catalyses cytidine(32) in tRNA + S-sulfanyl-L-cysteinyl-[cysteine desulfurase] + AH2 + ATP = 2-thiocytidine(32) in tRNA + L-cysteinyl-[cysteine desulfurase] + A + AMP + diphosphate + H(+). Its pathway is tRNA modification. Functionally, catalyzes the ATP-dependent 2-thiolation of cytidine in position 32 of tRNA, to form 2-thiocytidine (s(2)C32). The sulfur atoms are provided by the cysteine/cysteine desulfurase (IscS) system. The sequence is that of tRNA-cytidine(32) 2-sulfurtransferase from Shewanella sediminis (strain HAW-EB3).